Reading from the N-terminus, the 350-residue chain is Putative ATP-binding protein BruAb2_0487 (350 aa).

One can recognise an ABC transporter domain in the interval 4 to 234; the sequence is VSLRGISKTF…PANKFVAGFI (231 aa). 36 to 43 serves as a coordination point for ATP; that stretch reads GPSGCGKS.

Belongs to the ABC transporter superfamily. In terms of assembly, the complex is composed of two ATP-binding proteins (BruAb2_0487), two transmembrane proteins (BruAb2_0483) and a solute-binding protein (BruAb2_0484).

The protein localises to the cell inner membrane. Probably part of an ABC transporter complex. Probably responsible for energy coupling to the transport system. The protein is Putative ATP-binding protein BruAb2_0487 of Brucella abortus biovar 1 (strain 9-941).